A 595-amino-acid chain; its full sequence is Coagulation factor XII (595 aa).

The N-terminal stretch at 1–19 (MTALLFLGSLLMSLDLTLS) is a signal peptide. The 49-residue stretch at 41 to 89 (VDGKLCHFPFQYHRRLYHKCIHKGQPGSRPWCATTPNFDEDQQWGYCLE) folds into the Fibronectin type-II domain. Disulfide bonds link Cys46–Cys72, Cys60–Cys87, Cys97–Cys109, Cys103–Cys118, Cys120–Cys129, Cys134–Cys162, Cys160–Cys169, Cys177–Cys188, Cys182–Cys197, Cys199–Cys208, Cys216–Cys294, Cys237–Cys276, and Cys265–Cys289. Residues 93-130 (VKDHCSKHSPCHKGGTCVNTPNGPHCLCPEHLTGKHCQ) form the EGF-like 1 domain. Thr108 carries an O-linked (Fuc) threonine glycan. The Fibronectin type-I domain maps to 132–172 (EKCFESQLLKFFHENEIWFRTGPGGVARCQCKGPQAVCKLL). The EGF-like 2 domain maps to 173 to 209 (TSQVCRVNPCLNGGTCLLVEDHRLCHCPAGYAGPFCD). One can recognise a Kringle domain in the interval 215 to 294 (TCYEDRGLSY…SWDYCDLEQC (80 aa)). N-linked (GlcNAc...) asparagine glycosylation is present at Asn248. Thr298 carries O-linked (GalNAc...) threonine glycosylation. Positions 302–332 (PVSPESHDMLKPRPPILQSSPRDSTRNQNVV) are disordered. O-linked (GalNAc...) serine glycosylation is present at Ser307. The segment covering 318 to 332 (LQSSPRDSTRNQNVV) has biased composition (polar residues). Thr326 is a glycosylation site (O-linked (GalNAc...) threonine). Cystine bridges form between Cys340/Cys466, Cys378/Cys394, Cys386/Cys455, Cys417/Cys420, Cys480/Cys549, Cys512/Cys528, and Cys539/Cys570. The Peptidase S1 domain occupies 354–594 (VVGGLVALPG…YLDWIQEHTA (241 aa)). The Charge relay system role is filled by His393. Asn414 is a glycosylation site (N-linked (GlcNAc...) asparagine). The Charge relay system role is filled by Asp442. Ser543 serves as the catalytic Charge relay system.

It belongs to the peptidase S1 family. As to quaternary structure, interacts with HRG; the interaction, which is enhanced in the presence of zinc ions and inhibited by heparin-binding, inhibits factor XII autoactivation and contact-initiated coagulation. O- and N-glycosylated.

It localises to the secreted. It catalyses the reaction Selective cleavage of Arg-|-Ile bonds in factor VII to form factor VIIa and factor XI to form factor XIa.. Activity is promoted in the presence of negatively charged surfaces. Factor XII is a serum glycoprotein that participates in the initiation of blood coagulation, fibrinolysis, and the generation of bradykinin and angiotensin. Prekallikrein is cleaved by factor XII to form kallikrein, which then cleaves factor XII first to alpha-factor XIIa and then trypsin cleaves it to beta-factor XIIa. Alpha-factor XIIa activates factor XI to factor XIa. The sequence is that of Coagulation factor XII (F12) from Rattus norvegicus (Rat).